The primary structure comprises 137 residues: Large ribosomal subunit protein bL17 (137 aa).

This sequence belongs to the bacterial ribosomal protein bL17 family. Part of the 50S ribosomal subunit. Contacts protein L32.

This Bradyrhizobium sp. (strain ORS 278) protein is Large ribosomal subunit protein bL17.